A 235-amino-acid polypeptide reads, in one-letter code: MNSNANKTPIAIGISQIFPCSYLEDQQEQLLVIQEETLDPILFERLLAIGFRRSGSAIYKPRCPRCSACQPIRLPVREFIPSKRQKRTLANNRDLTWRITSSQTDEQYTLYERYIRQRHFDGPMFPPSKEQYEQFLFCHWLPPTFIEVYANNKLIAVAVTDTLPNSLSAIYSYFDPDEAHRSLGVLLILIQCRLAKLQRKEFLYLGYQIDANRKMSYKRLYRPYQILTPQGWEYS.

Belongs to the R-transferase family. Bpt subfamily.

It localises to the cytoplasm. It catalyses the reaction N-terminal L-glutamyl-[protein] + L-leucyl-tRNA(Leu) = N-terminal L-leucyl-L-glutamyl-[protein] + tRNA(Leu) + H(+). The enzyme catalyses N-terminal L-aspartyl-[protein] + L-leucyl-tRNA(Leu) = N-terminal L-leucyl-L-aspartyl-[protein] + tRNA(Leu) + H(+). In terms of biological role, functions in the N-end rule pathway of protein degradation where it conjugates Leu from its aminoacyl-tRNA to the N-termini of proteins containing an N-terminal aspartate or glutamate. The chain is Aspartate/glutamate leucyltransferase from Shewanella putrefaciens (strain CN-32 / ATCC BAA-453).